A 274-amino-acid chain; its full sequence is MSVQSTIRRKTAPDIRARKGGDPIVMLTSYHAHTASLVDRYCDAILVGDSLGNVMHGFETTVPVTLEMMILQGHAVMRGSQHALVVVDMPFGSYEASKEQAFHSAARILKETHCGAVKLEGGVRMAETIAFLTERGIPVMGHIGLTPQSINTLGSFRAQGREEGSWEPIEADARAVADAGAFSVVVEAVAEPLGRKITEMISIPTIGIGASAACDGQVLVLEDMLGLSPKPPKFVKRYGDLGPGIEAAIKGYAEEVRSRAFPGPEHVYGMKSKA.

Mg(2+) is bound by residues Asp-49 and Asp-88. 3-methyl-2-oxobutanoate contacts are provided by residues 49–50 (DS), Asp-88, and Lys-118. Residue Glu-120 participates in Mg(2+) binding. Glu-187 functions as the Proton acceptor in the catalytic mechanism.

The protein belongs to the PanB family. As to quaternary structure, homodecamer; pentamer of dimers. It depends on Mg(2+) as a cofactor.

Its subcellular location is the cytoplasm. It carries out the reaction 3-methyl-2-oxobutanoate + (6R)-5,10-methylene-5,6,7,8-tetrahydrofolate + H2O = 2-dehydropantoate + (6S)-5,6,7,8-tetrahydrofolate. Its pathway is cofactor biosynthesis; (R)-pantothenate biosynthesis; (R)-pantoate from 3-methyl-2-oxobutanoate: step 1/2. Catalyzes the reversible reaction in which hydroxymethyl group from 5,10-methylenetetrahydrofolate is transferred onto alpha-ketoisovalerate to form ketopantoate. This chain is 3-methyl-2-oxobutanoate hydroxymethyltransferase, found in Rhodopseudomonas palustris (strain ATCC BAA-98 / CGA009).